The sequence spans 182 residues: Large ribosomal subunit protein uL5 (182 aa).

Belongs to the universal ribosomal protein uL5 family. Part of the 50S ribosomal subunit; part of the 5S rRNA/L5/L18/L25 subcomplex. Contacts the 5S rRNA and the P site tRNA. Forms a bridge to the 30S subunit in the 70S ribosome.

Functionally, this is one of the proteins that bind and probably mediate the attachment of the 5S RNA into the large ribosomal subunit, where it forms part of the central protuberance. In the 70S ribosome it contacts protein S13 of the 30S subunit (bridge B1b), connecting the 2 subunits; this bridge is implicated in subunit movement. Contacts the P site tRNA; the 5S rRNA and some of its associated proteins might help stabilize positioning of ribosome-bound tRNAs. The chain is Large ribosomal subunit protein uL5 from Thermosipho melanesiensis (strain DSM 12029 / CIP 104789 / BI429).